The primary structure comprises 432 residues: Glutamate-1-semialdehyde 2,1-aminomutase 2 (432 aa).

K268 is subject to N6-(pyridoxal phosphate)lysine.

It belongs to the class-III pyridoxal-phosphate-dependent aminotransferase family. HemL subfamily. As to quaternary structure, homodimer. Pyridoxal 5'-phosphate is required as a cofactor.

The protein localises to the cytoplasm. The catalysed reaction is (S)-4-amino-5-oxopentanoate = 5-aminolevulinate. It participates in porphyrin-containing compound metabolism; protoporphyrin-IX biosynthesis; 5-aminolevulinate from L-glutamyl-tRNA(Glu): step 2/2. This Listeria innocua serovar 6a (strain ATCC BAA-680 / CLIP 11262) protein is Glutamate-1-semialdehyde 2,1-aminomutase 2.